Consider the following 155-residue polypeptide: 6,7-dimethyl-8-ribityllumazine synthase (155 aa).

Residues phenylalanine 23, 57-59 (AFE), and 81-83 (AVI) each bind 5-amino-6-(D-ribitylamino)uracil. Residue 86-87 (AT) coordinates (2S)-2-hydroxy-3-oxobutyl phosphate. Histidine 89 functions as the Proton donor in the catalytic mechanism. Phenylalanine 114 serves as a coordination point for 5-amino-6-(D-ribitylamino)uracil. A (2S)-2-hydroxy-3-oxobutyl phosphate-binding site is contributed by arginine 128.

The protein belongs to the DMRL synthase family.

The enzyme catalyses (2S)-2-hydroxy-3-oxobutyl phosphate + 5-amino-6-(D-ribitylamino)uracil = 6,7-dimethyl-8-(1-D-ribityl)lumazine + phosphate + 2 H2O + H(+). It functions in the pathway cofactor biosynthesis; riboflavin biosynthesis; riboflavin from 2-hydroxy-3-oxobutyl phosphate and 5-amino-6-(D-ribitylamino)uracil: step 1/2. In terms of biological role, catalyzes the formation of 6,7-dimethyl-8-ribityllumazine by condensation of 5-amino-6-(D-ribitylamino)uracil with 3,4-dihydroxy-2-butanone 4-phosphate. This is the penultimate step in the biosynthesis of riboflavin. The polypeptide is 6,7-dimethyl-8-ribityllumazine synthase (Pelotomaculum thermopropionicum (strain DSM 13744 / JCM 10971 / SI)).